A 225-amino-acid polypeptide reads, in one-letter code: Transcriptional regulatory protein AfsQ1 (225 aa).

Positions 3 to 116 (SLLLIEDDDA…VLDARIRAVL (114 aa)) constitute a Response regulatory domain. A 4-aspartylphosphate modification is found at D52. A DNA-binding region (ompR/PhoB-type) is located at residues 124 to 223 (TDSASFGSLV…VRGVGYRLDP (100 aa)).

Post-translationally, phosphorylated by AfsQ2.

It localises to the cytoplasm. It is found in the nucleoid. Functionally, forms part of a two-component regulatory system AfsQ1/AfsQ2 involved in secondary metabolism. The chain is Transcriptional regulatory protein AfsQ1 from Streptomyces coelicolor (strain ATCC BAA-471 / A3(2) / M145).